Reading from the N-terminus, the 287-residue chain is Aquaporin PIP1-1 (287 aa).

Transmembrane regions (helical) follow at residues I57–V77 and I92–I114. Residues N115–A117 carry the NPA 1 motif. The next 3 helical transmembrane spans lie at V134–F154, G176–A196, and I210–I230. Residues N236–A238 carry the NPA 2 motif. Residues I258–I278 traverse the membrane as a helical segment.

It belongs to the MIP/aquaporin (TC 1.A.8) family. PIP (TC 1.A.8.11) subfamily. As to quaternary structure, may interact with PIP1-2 to form heteromers. As to expression, highly expressed in roots, shoots and developing tassels, and at lower levels in leaves.

It is found in the cell membrane. Its function is as follows. Water channel required to facilitate the transport of water across cell membrane. Active as heteromers with PIP1-2, but not as homomers. This is Aquaporin PIP1-1 (PIP1-1) from Zea mays (Maize).